Here is a 227-residue protein sequence, read N- to C-terminus: uncharacterized protein (227 aa).

Positions 3 to 119 constitute an RCK N-terminal domain; that stretch reads RADFCIIGLG…STMGIREALI (117 aa). Positions 134–221 constitute an RCK C-terminal domain; that stretch reads HGLENEIINL…LNKYLNYINP (88 aa).

This is an uncharacterized protein from Mycoplasma genitalium (strain ATCC 33530 / DSM 19775 / NCTC 10195 / G37) (Mycoplasmoides genitalium).